The sequence spans 304 residues: Mitochondrial glycine transporter (304 aa).

3 Solcar repeats span residues 25-114 (HPVI…LKQY), 121-205 (PTAL…TKNI), and 215-299 (LIPI…MMAK). Helical transmembrane passes span 31 to 56 (FLCG…TRLQ), 89 to 115 (GMSP…KQYF), 127 to 152 (VMLG…TRYE), 180 to 203 (GLTA…NQTK), 219 to 245 (TNFS…KTHM), and 274 to 292 (GGIP…AWTV).

The protein belongs to the mitochondrial carrier (TC 2.A.29) family. SLC25A38 subfamily. In terms of tissue distribution, preferentially expressed in erythroid cells.

It is found in the mitochondrion inner membrane. It catalyses the reaction glycine(in) = glycine(out). Mitochondrial glycine transporter that imports glycine into the mitochondrial matrix. Plays an important role in providing glycine for the first enzymatic step in heme biosynthesis, the condensation of glycine with succinyl-CoA to produce 5-aminolevulinate (ALA) in the mitochondrial matrix. Required during erythropoiesis. Its function is as follows. Plays a role as pro-apoptotic protein that induces caspase-dependent apoptosis. The sequence is that of Mitochondrial glycine transporter from Homo sapiens (Human).